A 124-amino-acid chain; its full sequence is Small ribosomal subunit protein uS13 (124 aa).

The interval 98-124 is disordered; the sequence is VRGQRTRCNARTRKGPRKTVGAKRKEK.

This sequence belongs to the universal ribosomal protein uS13 family. Part of the 30S ribosomal subunit. Forms a loose heterodimer with protein S19. Forms two bridges to the 50S subunit in the 70S ribosome.

Its function is as follows. Located at the top of the head of the 30S subunit, it contacts several helices of the 16S rRNA. In the 70S ribosome it contacts the 23S rRNA (bridge B1a) and protein L5 of the 50S subunit (bridge B1b), connecting the 2 subunits; these bridges are implicated in subunit movement. Contacts the tRNAs in the A and P-sites. In Dictyoglomus turgidum (strain DSM 6724 / Z-1310), this protein is Small ribosomal subunit protein uS13.